The chain runs to 833 residues: Coiled-coil domain-containing protein 110 (833 aa).

Residues 431–778 (LQNYLKESVQ…REYLNLSDKI (348 aa)) are a coiled coil.

Its subcellular location is the nucleus. In Macaca fascicularis (Crab-eating macaque), this protein is Coiled-coil domain-containing protein 110 (CCDC110).